Reading from the N-terminus, the 450-residue chain is Tubulin alpha chain, testis-specific (450 aa).

An MREC motif motif is present at residues 1–4; sequence MREC. Gln11 serves as a coordination point for GTP. Lys40 carries the N6-acetyllysine modification. GTP is bound by residues Glu71, Ser140, Gly144, Thr145, Thr179, Asn206, and Asn228. Glu71 provides a ligand contact to Mg(2+). Residue Glu254 is part of the active site.

The protein belongs to the tubulin family. Dimer of alpha and beta chains. A typical microtubule is a hollow water-filled tube with an outer diameter of 25 nm and an inner diameter of 15 nM. Alpha-beta heterodimers associate head-to-tail to form protofilaments running lengthwise along the microtubule wall with the beta-tubulin subunit facing the microtubule plus end conferring a structural polarity. Microtubules usually have 13 protofilaments but different protofilament numbers can be found in some organisms and specialized cells. It depends on Mg(2+) as a cofactor. In terms of processing, some glutamate residues at the C-terminus are polyglycylated, resulting in polyglycine chains on the gamma-carboxyl group. Glycylation is mainly limited to tubulin incorporated into axonemes (cilia and flagella) whereas glutamylation is prevalent in neuronal cells, centrioles, axonemes, and the mitotic spindle. Both modifications can coexist on the same protein on adjacent residues, and lowering polyglycylation levels increases polyglutamylation, and reciprocally. The precise function of polyglycylation is still unclear. Some glutamate residues at the C-terminus are polyglutamylated, resulting in polyglutamate chains on the gamma-carboxyl group. Polyglutamylation plays a key role in microtubule severing by spastin (SPAST). SPAST preferentially recognizes and acts on microtubules decorated with short polyglutamate tails: severing activity by SPAST increases as the number of glutamates per tubulin rises from one to eight, but decreases beyond this glutamylation threshold. Post-translationally, acetylation of alpha chains at Lys-40 is located inside the microtubule lumen. This modification has been correlated with increased microtubule stability, intracellular transport and ciliary assembly. In terms of processing, undergoes a tyrosination/detyrosination cycle, the cyclic removal and re-addition of a C-terminal tyrosine residue by the enzymes tubulin tyrosine carboxypeptidase (MATCAP, VASH1 or VASH2) and tubulin tyrosine ligase (TTL), respectively. Tyrosination promotes microtubule interaction with CAP-Gly microtubule plus-end tracking proteins. Tyrosinated tubulins regulate the initiation of dynein-driven motility. Post-translationally, detyrosination is involved in metaphase plate congression by guiding chromosomes during mitosis. Detyrosination increases microtubules-dependent mechanotransduction in dystrophic cardiac and skeletal muscle. In cardiomyocytes, detyrosinated microtubules are required to resist to contractile compression during contraction. As to expression, testis specific.

It is found in the cytoplasm. Its subcellular location is the cytoskeleton. The enzyme catalyses GTP + H2O = GDP + phosphate + H(+). Its function is as follows. Tubulin is the major constituent of microtubules, a cylinder consisting of laterally associated linear protofilaments composed of alpha- and beta-tubulin heterodimers. Microtubules grow by the addition of GTP-tubulin dimers to the microtubule end, where a stabilizing cap forms. Below the cap, tubulin dimers are in GDP-bound state, owing to GTPase activity of alpha-tubulin. The protein is Tubulin alpha chain, testis-specific of Oncorhynchus mykiss (Rainbow trout).